The following is a 338-amino-acid chain: MQALMEDSKIKEEIWIEKYRPVRLNQVAGQDETIERLKSYVATKNLPHLLFSGPPGVGKTASAVSIAREIFGEDLWRENFTELNASDERGIDIVRNKIKNFAKTAPIGGAPFKIIFLDEADALTADAQSALRRTMERFSSNCRFILSCNYSSKIIEPIQSRCAVYRFRRLSDEAIKERLEYIAGDQGLSITEGGYEALIYVAQGDMRKAVNSLQAAAFIDTDKSISRETIYRTTATANPEEIKNLIETALRGNFRIARKELNRLLYEEGLSGEDIVGQIYRVVSEMDNLMVLDLGLTERDIVALVDVIGETDFRLTEGASEKIQLEALLAHFALSREN.

Residue 53-60 participates in ATP binding; it reads GPPGVGKT.

Belongs to the activator 1 small subunits family. RfcS subfamily. As to quaternary structure, heteromultimer composed of small subunits (RfcS) and large subunits (RfcL).

Part of the RFC clamp loader complex which loads the PCNA sliding clamp onto DNA. The protein is Replication factor C small subunit of Methanosarcina acetivorans (strain ATCC 35395 / DSM 2834 / JCM 12185 / C2A).